We begin with the raw amino-acid sequence, 77 residues long: Exodeoxyribonuclease 7 small subunit (77 aa).

This sequence belongs to the XseB family. Heterooligomer composed of large and small subunits.

Its subcellular location is the cytoplasm. The enzyme catalyses Exonucleolytic cleavage in either 5'- to 3'- or 3'- to 5'-direction to yield nucleoside 5'-phosphates.. In terms of biological role, bidirectionally degrades single-stranded DNA into large acid-insoluble oligonucleotides, which are then degraded further into small acid-soluble oligonucleotides. The protein is Exodeoxyribonuclease 7 small subunit of Chromobacterium violaceum (strain ATCC 12472 / DSM 30191 / JCM 1249 / CCUG 213 / NBRC 12614 / NCIMB 9131 / NCTC 9757 / MK).